A 1375-amino-acid chain; its full sequence is DNA-directed RNA polymerase subunit beta (1375 aa).

Belongs to the RNA polymerase beta chain family. In terms of assembly, the RNAP catalytic core consists of 2 alpha, 1 beta, 1 beta' and 1 omega subunit. When a sigma factor is associated with the core the holoenzyme is formed, which can initiate transcription.

The enzyme catalyses RNA(n) + a ribonucleoside 5'-triphosphate = RNA(n+1) + diphosphate. DNA-dependent RNA polymerase catalyzes the transcription of DNA into RNA using the four ribonucleoside triphosphates as substrates. The polypeptide is DNA-directed RNA polymerase subunit beta (Malacoplasma penetrans (strain HF-2) (Mycoplasma penetrans)).